The chain runs to 418 residues: Homocitrate synthase, mitochondrial (418 aa).

The segment covering 1–10 (MSVSEANGTE) has biased composition (polar residues). The segment at 1 to 25 (MSVSEANGTETIKPPMNGNPYGPNP) is disordered. Residues 14 to 25 (PPMNGNPYGPNP) show a composition bias toward low complexity. The region spanning 35-288 (FSIIESTLRE…THKYKLNQLR (254 aa)) is the Pyruvate carboxyltransferase domain. 2-oxoglutarate contacts are provided by arginine 43, glutamate 44, and histidine 103. Glutamate 44 provides a ligand contact to L-lysine. Zn(2+) is bound at residue glutamate 44. Position 123 (aspartate 123) interacts with L-lysine. Residues arginine 163, serine 165, threonine 197, histidine 224, and histidine 226 each contribute to the 2-oxoglutarate site. Threonine 197 contributes to the L-lysine binding site. Histidine 224 and histidine 226 together coordinate Zn(2+). Histidine 321 (proton acceptor) is an active-site residue.

This sequence belongs to the alpha-IPM synthase/homocitrate synthase family. Homocitrate synthase LYS20/LYS21 subfamily. Mg(2+) serves as cofactor. Requires Mn(2+) as cofactor. Zn(2+) is required as a cofactor. The cofactor is Co(2+).

The protein resides in the mitochondrion. It carries out the reaction acetyl-CoA + 2-oxoglutarate + H2O = (2R)-homocitrate + CoA + H(+). It functions in the pathway amino-acid biosynthesis; L-lysine biosynthesis via AAA pathway; L-alpha-aminoadipate from 2-oxoglutarate: step 1/5. With respect to regulation, the activity is controled by feedback inhibition by L-lysine, the final product of the pathway that acts as a competitive inhibitor of 2-oxoglutarate. In terms of biological role, catalyzes the aldol-type condensation of 2-oxoglutarate with acetyl-CoA to yield homocitrate, the first step of the alpha-aminoadipate (AAA) lysine biosynthesis pathway. The polypeptide is Homocitrate synthase, mitochondrial (Schizosaccharomyces pombe (strain 972 / ATCC 24843) (Fission yeast)).